Reading from the N-terminus, the 2063-residue chain is Nuclear receptor coactivator 6 (2063 aa).

Residues 1 to 928 (MVLDDLPNLE…PPRKKKNSQQ (928 aa)) are TBP/GTF2A-binding region. Residues 1–1057 (MVLDDLPNLE…LPVSQNVHPP (1057 aa)) form a CREBBP-binding region region. Residues 1–1310 (MVLDDLPNLE…QTHKLDSVVV (1310 aa)) form an NCOA1-binding region region. Asymmetric dimethylarginine is present on Arg-95. Disordered regions lie at residues 184 to 251 (IPPG…VNRQ), 281 to 549 (QQQQ…APQL), and 789 to 811 (RPPG…ANND). The span at 281-300 (QQQQQLQARPPQQHQQQQPQ) shows a compositional bias: low complexity. Polar residues-rich tracts occupy residues 353–368 (MQQQ…TVQT), 379–406 (GSQQ…QMKS), 417–453 (PLQQ…QQQM), 462–502 (PLPQ…QGPQ), and 522–549 (GQAN…APQL). The segment at 773-927 (VNNSPSQVMG…KPPRKKKNSQ (155 aa)) is NCOA6IP-binding region. Residue Ser-884 is modified to Phosphoserine; by MAPK; in vitro. Residues 887–891 (LVNLL) carry the LXXLL motif 1 motif. Disordered stretches follow at residues 899–1278 (HFGV…LNPT), 1310–1353 (VNSG…KAPK), and 1448–1474 (EVKM…PSVE). A compositionally biased stretch (low complexity) spans 903 to 912 (NNKQNNTNAN). Positions 913 to 925 (KPKKKKPPRKKKN) are enriched in basic residues. A compositionally biased stretch (low complexity) spans 982-992 (PLQQMPPQLMQ). A compositionally biased stretch (pro residues) spans 995 to 1020 (APPPQPPQQQPQPQLPQQQQPPPPSQ). Low complexity predominate over residues 1021–1041 (PQSQQQQQQQQQMMMMLMMQQ). Residues Arg-1047 and Arg-1058 each carry the asymmetric dimethylarginine modification. Residues 1063-1075 (PDSQRMPMQQSGS) are compositionally biased toward polar residues. At Arg-1096 the chain carries Asymmetric dimethylarginine. Composition is skewed to polar residues over residues 1104–1125 (PLGS…SSSP), 1173–1191 (LSAT…SLPS), and 1202–1214 (APTQ…TPNR). The segment covering 1219-1232 (PYYPQTPNNRPPST) has biased composition (pro residues). Positions 1310–1320 (VNSGKQSNSGA) are enriched in polar residues. A compositionally biased stretch (low complexity) spans 1322–1345 (KRASPSNSRRSSPGSSRKTTPSPG). The LXXLL motif 2 motif lies at 1491–1495 (LSQLL). The interval 1641–2063 (SEGQSAAQSN…AVQSKRRKSK (423 aa)) is EP300/CRSP3-binding region. Residues 1738–1820 (ATPVQLPSPP…VSSSKGKGKV (83 aa)) are disordered. Positions 1750-1763 (SSPVVPSHPPVQQV) are enriched in low complexity. The span at 1773–1798 (PQVNTSADQNTLPSSQSTTMVSPLLT) shows a compositional bias: polar residues. Low complexity predominate over residues 1799–1815 (NSPGSSGNRRSPVSSSK). N6-acetyllysine occurs at positions 1819 and 1822. Disordered regions lie at residues 1837-1908 (GSLE…LPGG) and 1995-2063 (IVSG…RKSK). The segment covering 2002 to 2011 (EPKEIVEKSK) has biased composition (basic and acidic residues). A Phosphoserine modification is found at Ser-2018.

As to quaternary structure, monomer and homodimer. Interacts with RBM39. Interacts in vitro with the basal transcription factors GTF2A and TBP, suggesting an autonomous transactivation function. Interacts with NCOA1, CRSP3, RBM14, the histone acetyltransferases EP300 and CREBBP, and with the methyltransferases NCOA6IP and PRMT2/HRMT1L1. Component of the MLL2/3 complex (also named ASCOM complex), at least composed of KMT2D/MLL2 or KMT2C/MLL3, ASH2L, RBBP5, WDR5, NCOA6, DPY30, KDM6A, PAXIP1/PTIP, PAGR1 and alpha- and beta-tubulin. Interacts with ZNF335; may enhance ligand-dependent transcriptional activation by nuclear hormone receptors. Post-translationally, phosphorylated by PRKDC. In terms of processing, phosphorylation on Ser-884 leads to a strong decrease in binding to ESR1 and ESR2. Ubiquitous. Highly expressed in brain, prostate, testis and ovary; weakly expressed in lung, thymus and small intestine.

The protein resides in the nucleus. Nuclear receptor coactivator that directly binds nuclear receptors and stimulates the transcriptional activities in a hormone-dependent fashion. Coactivates expression in an agonist- and AF2-dependent manner. Involved in the coactivation of different nuclear receptors, such as for steroids (GR and ERs), retinoids (RARs and RXRs), thyroid hormone (TRs), vitamin D3 (VDR) and prostanoids (PPARs). Probably functions as a general coactivator, rather than just a nuclear receptor coactivator. May also be involved in the coactivation of the NF-kappa-B pathway. May coactivate expression via a remodeling of chromatin and its interaction with histone acetyltransferase proteins. The sequence is that of Nuclear receptor coactivator 6 (NCOA6) from Homo sapiens (Human).